The sequence spans 379 residues: Heme chaperone HemW (379 aa).

The Radical SAM core domain maps to 1-233 (MKSAYIHIPF…MSKMEAHGIH (233 aa)). Tyr5 is a binding site for S-adenosyl-L-methionine. The [4Fe-4S] cluster site is built by Cys11, Cys15, and Cys18. Residues Gly60, 61–62 (GT), Glu94, Gln121, Arg133, and Asp158 each bind S-adenosyl-L-methionine.

Belongs to the anaerobic coproporphyrinogen-III oxidase family. HemW subfamily. The cofactor is [4Fe-4S] cluster.

The protein localises to the cytoplasm. Probably acts as a heme chaperone, transferring heme to an unknown acceptor. Binds one molecule of heme per monomer, possibly covalently. Binds 1 [4Fe-4S] cluster. The cluster is coordinated with 3 cysteines and an exchangeable S-adenosyl-L-methionine. In Bacillus subtilis (strain 168), this protein is Heme chaperone HemW.